We begin with the raw amino-acid sequence, 306 residues long: D-alanine--D-alanine ligase (306 aa).

The ATP-grasp domain maps to 101-300; that stretch reads KVVMAAAGIP…FGELVTWMVE (200 aa). 128–182 is a binding site for ATP; the sequence is LPPPYVLKPNTGGSSVGVFIVKEDQPHPPQELFRADWTFGESLMAEPFIKGLELT. 3 residues coordinate Mg(2+): D250, E267, and N269.

This sequence belongs to the D-alanine--D-alanine ligase family. The cofactor is Mg(2+). Mn(2+) is required as a cofactor.

It is found in the cytoplasm. The enzyme catalyses 2 D-alanine + ATP = D-alanyl-D-alanine + ADP + phosphate + H(+). It functions in the pathway cell wall biogenesis; peptidoglycan biosynthesis. Its function is as follows. Cell wall formation. In Azorhizobium caulinodans (strain ATCC 43989 / DSM 5975 / JCM 20966 / LMG 6465 / NBRC 14845 / NCIMB 13405 / ORS 571), this protein is D-alanine--D-alanine ligase.